Here is a 1168-residue protein sequence, read N- to C-terminus: TBC1 domain family member 1 (1168 aa).

Ser146 bears the Phosphoserine mark. The tract at residues 203–238 (VSGSRGSESPRPNPPHAAPTGSQEPVRRPMRKSFSQ) is disordered. Ser235 is modified (phosphoserine; by PKB/AKT1). The residue at position 237 (Ser237) is a Phosphoserine. Residues 246-404 (FRKELQDGGL…LHKLCERIEG (159 aa)) form the PID domain. Ser503 carries the phosphoserine modification. Thr505 carries the phosphothreonine; by PKB/AKT1 modification. Phosphoserine occurs at positions 507, 525, and 527. A compositionally biased stretch (low complexity) spans 532–542 (SSLSSTLSNTS). Disordered regions lie at residues 532–551 (SSLS…CEKE) and 564–587 (GSSE…LSPQ). Phosphoserine occurs at positions 565, 566, 570, 571, and 585. Residue Thr596 is modified to Phosphothreonine. Residue Ser614 is modified to Phosphoserine. Phosphoserine; by PKB/AKT1 is present on Ser627. Disordered regions lie at residues 628-658 (VSTE…KTRR) and 678-717 (SSSR…KRTS). Residues 632–645 (TPHERKDFESKANH) are compositionally biased toward basic and acidic residues. Ser695 and Ser941 each carry phosphoserine. The 195-residue stretch at 800-994 (GVPRHHRGEI…RVFDMIFLQG (195 aa)) folds into the Rab-GAP TBC domain. Tyr952 bears the Phosphotyrosine mark. Thr1131 is subject to Phosphothreonine. Residues 1145–1159 (ELRRRSAEPSDREPE) are compositionally biased toward basic and acidic residues. A disordered region spans residues 1145 to 1168 (ELRRRSAEPSDREPECTQPEPTGD).

In terms of assembly, interacts with APPL2 (via BAR domain); interaction is dependent of TBC1D1 phosphorylation at Ser-235; interaction diminishes the phosphorylation of TBC1D1 at Thr-596, resulting in inhibition of SLC2A4/GLUT4 translocation and glucose uptake. Insulin-stimulated phosphorylation by AKT family kinases stimulates SLC2A4/GLUT4 translocation.

The protein localises to the nucleus. Its function is as follows. May act as a GTPase-activating protein for Rab family protein(s). May play a role in the cell cycle and differentiation of various tissues. Involved in the trafficking and translocation of GLUT4-containing vesicles and insulin-stimulated glucose uptake into cells. The protein is TBC1 domain family member 1 (TBC1D1) of Homo sapiens (Human).